A 642-amino-acid polypeptide reads, in one-letter code: Kinesin-like protein KIF12 (642 aa).

Positions 1 to 13 (MEERGSPDGDPAR) are enriched in basic and acidic residues. The disordered stretch occupies residues 1-25 (MEERGSPDGDPARNLEQGPEGSETP). A Phosphoserine modification is found at Ser-6. A Kinesin motor domain is found at 25–360 (PIQVVLRVRP…LRYASRAQRI (336 aa)). 104–111 (GQTGSGKT) contacts ATP. A Phosphoserine modification is found at Ser-369. Residues 376-465 (QQVENELLRL…QVHDLERRLL (90 aa)) adopt a coiled-coil conformation. Disordered stretches follow at residues 531 to 561 (GHIS…SQSD) and 579 to 642 (PSAP…LSSC). A compositionally biased stretch (pro residues) spans 538-548 (WPPPWAPPPSP). A compositionally biased stretch (polar residues) spans 610-642 (TLTQQINSSLHLSQRQPQPSEDTQSPGQGLSSC). Position 634 is a phosphoserine (Ser-634).

This sequence belongs to the TRAFAC class myosin-kinesin ATPase superfamily. Kinesin family. As to expression, expressed in the liver.

Its subcellular location is the cytoplasm. The protein localises to the cytoskeleton. This is Kinesin-like protein KIF12 (Kif12) from Mus musculus (Mouse).